A 141-amino-acid chain; its full sequence is MNQRRENYVSDPSAYPDRSADWYEYFDRKRREEIIEIIDSHPEIIDEHERNPFGYRNHPSPHLQRVHNYFRMQPTFGKYYIYTEREWSSYRIAEIREFGKLPVLTDDSFATEEEAMHAVFLKRIEDVRNELSQAEQREIAN.

As to quaternary structure, heterotetramer of two DmfA1 (alpha) and two DmfA2 (beta) subunits.

It catalyses the reaction N,N-dimethylformamide + H2O = dimethylamine + formate. Hydrolyzes N,N-dimethylformamide, and to a lesser extent N,N-dimethylacetamide and N,N-diethylacetamide. Has no activity against the substituted amides N-methylformamide, N-ethylformamide, N-ethylformamide and N-methylacetamide or the unsubstituted amides formamide, nicotinamide, acetoamide, benzamide, acetamide and acrylamide. This is N,N-dimethylformamidase alpha subunit from Paracoccus aminophilus.